A 252-amino-acid chain; its full sequence is 3-deoxy-manno-octulosonate cytidylyltransferase (252 aa).

This sequence belongs to the KdsB family.

Its subcellular location is the cytoplasm. It catalyses the reaction 3-deoxy-alpha-D-manno-oct-2-ulosonate + CTP = CMP-3-deoxy-beta-D-manno-octulosonate + diphosphate. The protein operates within nucleotide-sugar biosynthesis; CMP-3-deoxy-D-manno-octulosonate biosynthesis; CMP-3-deoxy-D-manno-octulosonate from 3-deoxy-D-manno-octulosonate and CTP: step 1/1. Its pathway is bacterial outer membrane biogenesis; lipopolysaccharide biosynthesis. Its function is as follows. Activates KDO (a required 8-carbon sugar) for incorporation into bacterial lipopolysaccharide in Gram-negative bacteria. The sequence is that of 3-deoxy-manno-octulosonate cytidylyltransferase from Rhodospirillum rubrum (strain ATCC 11170 / ATH 1.1.1 / DSM 467 / LMG 4362 / NCIMB 8255 / S1).